We begin with the raw amino-acid sequence, 206 residues long: Large ribosomal subunit protein uL4 (206 aa).

It belongs to the universal ribosomal protein uL4 family. As to quaternary structure, part of the 50S ribosomal subunit.

Its function is as follows. One of the primary rRNA binding proteins, this protein initially binds near the 5'-end of the 23S rRNA. It is important during the early stages of 50S assembly. It makes multiple contacts with different domains of the 23S rRNA in the assembled 50S subunit and ribosome. Forms part of the polypeptide exit tunnel. The sequence is that of Large ribosomal subunit protein uL4 from Methylorubrum extorquens (strain CM4 / NCIMB 13688) (Methylobacterium extorquens).